A 446-amino-acid chain; its full sequence is 6-methylsalicylate 1-monooxygenase atA (446 aa).

A helical membrane pass occupies residues 7-27; it reads VSVAIIGGGIGGLSLAIGLLQ. Positions 37 and 50 each coordinate FAD. Asn107 carries an N-linked (GlcNAc...) asparagine glycan. Arg116 contributes to the FAD binding site. The active site involves Arg200. Positions 311 and 324 each coordinate FAD.

The protein belongs to the paxM FAD-dependent monooxygenase family. It depends on FAD as a cofactor.

It localises to the membrane. It carries out the reaction 6-methylsalicylate + AH2 + O2 + H(+) = 3-methylcatechol + A + CO2 + H2O. The protein operates within secondary metabolite biosynthesis. 6-methylsalicylate 1-monooxygenase; part of the gene cluster that mediates the biosynthesis of terreic acid, a quinone epoxide inhibitor of Bruton's tyrosine kinase. The first step of the pathway is the synthesis of 6-methylsalicylic acid (6-MSA) by the 6-methylsalicylic acid synthase atX. In the biosynthesis of 6-MSA, atX utilizes one acetyl-CoA and three malonyl-CoAs as its substrates and catalyzes a series of programmed reactions including Claisen condensation, reduction, aldol cyclization, and the hydrolytic cleavage that yields 6-MSA. The 6-methylsalicylate 1-monooxygenase atA then catalyzes the decarboxylative hydroxylation of 6-MSA to 3-methylcatechol. The next step is the conversion of 3-methylcatechol to 3-methyl-1,2,4-benzenetriol by cytochrome P450 monooxygenase atE, which is enhanced by cytochrome P450 monooxygenase atG. Then, the epoxidase atD catalyzes the epoxidation and hydroxyl oxidation of 3-methyl-1,2,4-benzenetriol to terremutin. Lastly, GMC oxidoreductase atC oxidizes terremutin to terreic acid. This is 6-methylsalicylate 1-monooxygenase atA from Aspergillus terreus (strain NIH 2624 / FGSC A1156).